A 203-amino-acid chain; its full sequence is Small ribosomal subunit protein uS4 (203 aa).

Positions 22-45 (TGKELARRPYKPGQHGPNSRGKVS) are disordered. The region spanning 93–156 (QRLDNVVYRL…QNISTIKEAV (64 aa)) is the S4 RNA-binding domain.

The protein belongs to the universal ribosomal protein uS4 family. In terms of assembly, part of the 30S ribosomal subunit. Contacts protein S5. The interaction surface between S4 and S5 is involved in control of translational fidelity.

One of the primary rRNA binding proteins, it binds directly to 16S rRNA where it nucleates assembly of the body of the 30S subunit. In terms of biological role, with S5 and S12 plays an important role in translational accuracy. The polypeptide is Small ribosomal subunit protein uS4 (Enterococcus faecalis (strain ATCC 700802 / V583)).